Here is a 491-residue protein sequence, read N- to C-terminus: Probable cytosol aminopeptidase (491 aa).

Lysine 260 and aspartate 265 together coordinate Mn(2+). The active site involves lysine 272. Residues aspartate 284, aspartate 343, and glutamate 345 each coordinate Mn(2+). Arginine 347 is an active-site residue.

It belongs to the peptidase M17 family. Mn(2+) is required as a cofactor.

The protein resides in the cytoplasm. The enzyme catalyses Release of an N-terminal amino acid, Xaa-|-Yaa-, in which Xaa is preferably Leu, but may be other amino acids including Pro although not Arg or Lys, and Yaa may be Pro. Amino acid amides and methyl esters are also readily hydrolyzed, but rates on arylamides are exceedingly low.. It carries out the reaction Release of an N-terminal amino acid, preferentially leucine, but not glutamic or aspartic acids.. Functionally, presumably involved in the processing and regular turnover of intracellular proteins. Catalyzes the removal of unsubstituted N-terminal amino acids from various peptides. This chain is Probable cytosol aminopeptidase, found in Rippkaea orientalis (strain PCC 8801 / RF-1) (Cyanothece sp. (strain PCC 8801)).